A 349-amino-acid chain; its full sequence is Secondary metabolism regulator LAE1 (349 aa).

The interval 1–46 (MSSRNAPSGCVAPSPATAAPPSPTNLRLTVGQSGSESANEPGGEPE) is disordered. Positions 25 to 38 (NLRLTVGQSGSESA) are enriched in polar residues.

It belongs to the methyltransferase superfamily. LaeA methyltransferase family. In terms of assembly, component of the heterotrimeric velvet complex composed of LAE1, VEL1 and VEL2; VEL1 acting as a bridging protein between LAE1 and VEL2.

The protein resides in the nucleus. The catalysed reaction is L-methionyl-[protein] + S-adenosyl-L-methionine = S-methyl-L-methionyl-[protein] + S-adenosyl-L-homocysteine. Its function is as follows. Methyltransferase that performs automethylation. No other methyl-accepting substrate has been identified yet. Component of the velvet transcription factor complex that acts as a global regulator for secondary metabolite gene expression. Controls the expression of the gamma-pentyl-pyrone gene clusters. Required for the expression of cellulase. Regulates asexual sporulation (conidiation) by environmental stimuli such as light and/or mechanical injury. Required for oxidative stress tolerance. Also plays a role in defense and parasitism on other fungi. This chain is Secondary metabolism regulator LAE1, found in Hypocrea atroviridis (strain ATCC 20476 / IMI 206040) (Trichoderma atroviride).